The primary structure comprises 101 residues: MILEHVLVLSAYLFLIGLYGLITSRNMVRALMCLELILNAVNMNFVTFSDFFDNSQLKGEIFCIFVIAIAAAEAAIGLAIVSSIYRNRKSIRINQSTLLNK.

The next 3 helical transmembrane spans lie at 2-22 (ILEH…YGLI), 32-52 (MCLE…SDFF), and 61-81 (IFCI…LAIV).

Belongs to the complex I subunit 4L family. As to quaternary structure, NDH is composed of at least 16 different subunits, 5 of which are encoded in the nucleus.

Its subcellular location is the plastid. The protein resides in the chloroplast thylakoid membrane. It carries out the reaction a plastoquinone + NADH + (n+1) H(+)(in) = a plastoquinol + NAD(+) + n H(+)(out). The catalysed reaction is a plastoquinone + NADPH + (n+1) H(+)(in) = a plastoquinol + NADP(+) + n H(+)(out). Functionally, NDH shuttles electrons from NAD(P)H:plastoquinone, via FMN and iron-sulfur (Fe-S) centers, to quinones in the photosynthetic chain and possibly in a chloroplast respiratory chain. The immediate electron acceptor for the enzyme in this species is believed to be plastoquinone. Couples the redox reaction to proton translocation, and thus conserves the redox energy in a proton gradient. This is NAD(P)H-quinone oxidoreductase subunit 4L, chloroplastic from Arabidopsis thaliana (Mouse-ear cress).